Reading from the N-terminus, the 581-residue chain is Bestrophin-1 (581 aa).

The Cytoplasmic portion of the chain corresponds to 1–31 (MTVTYSSQVANARLGSFSRLLLCWRGSIYKL). Residue Ala10 coordinates Ca(2+). A helical membrane pass occupies residues 32–51 (LYGEFLIFLLCYYIIRFIYR). The Extracellular segment spans residues 52–60 (MALTDEQQV). A helical transmembrane segment spans residues 61–82 (IFEKLTLYCDSYIQLIPISFVL). Topologically, residues 83 to 237 (GFYVTLVVTR…DWISVPLVYT (155 aa)) are cytoplasmic. A helical transmembrane segment spans residues 238–255 (QVVTVAVYSFFLACLVGR). At 256–274 (QFLNPAKAYPGHEMDLVVP) the chain is on the extracellular side. The helical transmembrane segment at 275–288 (LFTFLQFFFYAGWL) threads the bilayer. Residues 289-581 (KVAEQLINPF…ALENRDEAHS (293 aa)) are Cytoplasmic-facing. Gln293, Asn296, Asp301, and Asp304 together coordinate Ca(2+). The tract at residues 416 to 440 (EGHFHEGHPKNLRGARLDSSDQEDS) is disordered.

It belongs to the anion channel-forming bestrophin (TC 1.A.46) family. Calcium-sensitive chloride channel subfamily. Interacts with YWHAG; this interaction promotes the ligand-gated L-glutamate channel activity leading to the positive regulation of NMDA glutamate receptor activity through the L-glutamate secretion. Phosphorylated (in vitro). In terms of processing, dephosphorylated (in vitro) by PP2A.

The protein resides in the cell membrane. It is found in the basolateral cell membrane. It carries out the reaction chloride(in) = chloride(out). It catalyses the reaction hydrogencarbonate(in) = hydrogencarbonate(out). The catalysed reaction is 4-aminobutanoate(in) = 4-aminobutanoate(out). The enzyme catalyses L-glutamate(out) = L-glutamate(in). Ligand-gated anion channel that allows the movement of anions across cell membranes when activated by calcium (Ca2+). Allows the movement of chloride and hydrogencarbonate. Found in a partially open conformation leading to significantly smaller chloride movement. Upon F2R/PAR-1 activation, the sequestered calcium is released into the cytosol of astrocytes, leading to the (Ca2+)-dependent release of L-glutamate into the synaptic cleft that targets the neuronal postsynaptic GRIN2A/NMDAR receptor resulting in the synaptic plasticity regulation. Upon activation of the norepinephrine-alpha-1 adrenergic receptor signaling pathway, transports as well D-serine than L-glutamate in a (Ca2+)-dependent manner, leading to activation of adjacent NMDAR receptors and therefore regulates the heterosynaptic long-term depression and metaplasticity during initial memory acquisition. Releases the 4-aminobutanoate neurotransmitter in a (Ca2+)-dependent manner, and participates in its tonic release from cerebellar glial cells. The sequence is that of Bestrophin-1 from Sus scrofa (Pig).